A 450-amino-acid chain; its full sequence is Chromosomal replication initiator protein DnaA (450 aa).

Residues 1–71 (MEDVWLQAQS…SVRSLTDSHF (71 aa)) form a domain I, interacts with DnaA modulators region. The tract at residues 71 to 113 (FQVELQVAARQQEKTAKSPRKSHTEDELGPVESEKCAPAEFST) is domain II. A disordered region spans residues 82-103 (QEKTAKSPRKSHTEDELGPVES). Positions 114-330 (NLNAKYTFDT…GMLIRLGAVA (217 aa)) are domain III, AAA+ region. 4 residues coordinate ATP: glycine 158, glycine 160, lysine 161, and threonine 162. The interval 331 to 450 (SLTGKNITLD…IETLRKGLLN (120 aa)) is domain IV, binds dsDNA.

Belongs to the DnaA family. As to quaternary structure, oligomerizes as a right-handed, spiral filament on DNA at oriC.

It localises to the cytoplasm. Functionally, plays an essential role in the initiation and regulation of chromosomal replication. ATP-DnaA binds to the origin of replication (oriC) to initiate formation of the DNA replication initiation complex once per cell cycle. Binds the DnaA box (a 9 base pair repeat at the origin) and separates the double-stranded (ds)DNA. Forms a right-handed helical filament on oriC DNA; dsDNA binds to the exterior of the filament while single-stranded (ss)DNA is stabiized in the filament's interior. The ATP-DnaA-oriC complex binds and stabilizes one strand of the AT-rich DNA unwinding element (DUE), permitting loading of DNA polymerase. After initiation quickly degrades to an ADP-DnaA complex that is not apt for DNA replication. Binds acidic phospholipids. The protein is Chromosomal replication initiator protein DnaA of Geobacter metallireducens (strain ATCC 53774 / DSM 7210 / GS-15).